A 74-amino-acid polypeptide reads, in one-letter code: Peptide BmKa2 (74 aa).

Residues 1 to 24 (MSSKTLLVLLLVGVLVSTFFTADA) form the signal peptide.

The protein belongs to the non-disulfide-bridged peptide (NDBP) superfamily. Long chain multifunctional peptide (group 2) family. Expressed by the venom gland.

It localises to the secreted. In terms of biological role, highly acidic peptide that may have antibacterial activity. This chain is Peptide BmKa2, found in Olivierus martensii (Manchurian scorpion).